The primary structure comprises 274 residues: Thiamine kinase (274 aa).

This sequence belongs to the thiamine kinase family.

The enzyme catalyses thiamine + ATP = thiamine phosphate + ADP + H(+). It participates in cofactor biosynthesis; thiamine diphosphate biosynthesis; thiamine phosphate from thiamine: step 1/1. Its function is as follows. Catalyzes the ATP-dependent phosphorylation of thiamine to thiamine phosphate. Is involved in thiamine salvage. The polypeptide is Thiamine kinase (Salmonella heidelberg (strain SL476)).